A 290-amino-acid chain; its full sequence is Small ribosomal subunit biogenesis GTPase RsgA (290 aa).

Positions 62 to 213 constitute a CP-type G domain; it reads KNSLVRPPIV…IADTPGFSSL (152 aa). Residues 111-114 and 156-164 each bind GTP; these read SKMD and GQTGVGKST. Residues Cys-237, Cys-242, His-244, and Cys-250 each contribute to the Zn(2+) site.

The protein belongs to the TRAFAC class YlqF/YawG GTPase family. RsgA subfamily. As to quaternary structure, monomer. Associates with 30S ribosomal subunit, binds 16S rRNA. It depends on Zn(2+) as a cofactor.

It is found in the cytoplasm. One of several proteins that assist in the late maturation steps of the functional core of the 30S ribosomal subunit. Helps release RbfA from mature subunits. May play a role in the assembly of ribosomal proteins into the subunit. Circularly permuted GTPase that catalyzes slow GTP hydrolysis, GTPase activity is stimulated by the 30S ribosomal subunit. This is Small ribosomal subunit biogenesis GTPase RsgA from Streptococcus pyogenes serotype M3 (strain ATCC BAA-595 / MGAS315).